A 261-amino-acid polypeptide reads, in one-letter code: Carboxy-terminal domain RNA polymerase II polypeptide A small phosphatase 1 (261 aa).

Met1 is subject to N-acetylmethionine. Residues 1-10 (MDSSAVITQI) show a composition bias toward polar residues. A disordered region spans residues 1-33 (MDSSAVITQISKEEARGPLRGKGDQKSAASQKP). A compositionally biased stretch (basic and acidic residues) spans 11–25 (SKEEARGPLRGKGDQ). The 159-residue stretch at 86-244 (QDSDKICVVI…HDLLPFFEQL (159 aa)) folds into the FCP1 homology domain. The 4-aspartylphosphate intermediate role is filled by Asp96. 3 residues coordinate Mg(2+): Asp96, Asp98, and Asn207. The active-site Proton donor is Asp98.

Monomer. Interacts with GTF2F1. Interacts with REST. It depends on Mg(2+) as a cofactor. As to expression, expression is restricted to non-neuronal tissues. Highest expression in skeletal muscle, spleen, lung and placenta.

It localises to the nucleus. The enzyme catalyses O-phospho-L-seryl-[protein] + H2O = L-seryl-[protein] + phosphate. It carries out the reaction O-phospho-L-threonyl-[protein] + H2O = L-threonyl-[protein] + phosphate. With respect to regulation, stimulated by GTF2F1. Inhibited by beryllofluoride anions. Its function is as follows. Preferentially catalyzes the dephosphorylation of 'Ser-5' within the tandem 7 residue repeats in the C-terminal domain (CTD) of the largest RNA polymerase II subunit POLR2A. Negatively regulates RNA polymerase II transcription, possibly by controlling the transition from initiation/capping to processive transcript elongation. Recruited by REST to neuronal genes that contain RE-1 elements, leading to neuronal gene silencing in non-neuronal cells. This is Carboxy-terminal domain RNA polymerase II polypeptide A small phosphatase 1 (CTDSP1) from Homo sapiens (Human).